We begin with the raw amino-acid sequence, 252 residues long: 5-oxoprolinase subunit A (252 aa).

This sequence belongs to the LamB/PxpA family. Forms a complex composed of PxpA, PxpB and PxpC.

The catalysed reaction is 5-oxo-L-proline + ATP + 2 H2O = L-glutamate + ADP + phosphate + H(+). Functionally, catalyzes the cleavage of 5-oxoproline to form L-glutamate coupled to the hydrolysis of ATP to ADP and inorganic phosphate. The polypeptide is 5-oxoprolinase subunit A (Mycolicibacterium gilvum (strain PYR-GCK) (Mycobacterium gilvum (strain PYR-GCK))).